We begin with the raw amino-acid sequence, 979 residues long: UPF0182 protein Rv0064 (979 aa).

7 helical membrane passes run 19-41, 63-85, 114-136, 174-196, 208-230, 261-280, and 285-307; these read LVTA…DIYV, LAIV…LLAY, LFGW…FDWV, WLFV…FGGL, AARV…AYWL, LVLV…AIFL, and IPAM…WPLL. Residues 898 to 948 form a disordered region; it reads GTGRVATARGGDAASAPPPGAGGPAPPQAVPPPRTTQPPAAPPRGPDVPPA. Pro residues predominate over residues 913-946; the sequence is APPPGAGGPAPPQAVPPPRTTQPPAAPPRGPDVP.

Belongs to the UPF0182 family.

The protein localises to the cell membrane. The protein is UPF0182 protein Rv0064 of Mycobacterium tuberculosis (strain ATCC 25618 / H37Rv).